The sequence spans 445 residues: Amino-acid acetyltransferase (445 aa).

The region spanning 299 to 438 (EQVRQAQIDD…QGLYNYQRNS (140 aa)) is the N-acetyltransferase domain.

This sequence belongs to the acetyltransferase family. ArgA subfamily.

The protein resides in the cytoplasm. The catalysed reaction is L-glutamate + acetyl-CoA = N-acetyl-L-glutamate + CoA + H(+). It functions in the pathway amino-acid biosynthesis; L-arginine biosynthesis; N(2)-acetyl-L-ornithine from L-glutamate: step 1/4. The sequence is that of Amino-acid acetyltransferase from Vibrio atlanticus (strain LGP32) (Vibrio splendidus (strain Mel32)).